A 91-amino-acid polypeptide reads, in one-letter code: Small ribosomal subunit protein uS19 (91 aa).

The protein belongs to the universal ribosomal protein uS19 family.

In terms of biological role, protein S19 forms a complex with S13 that binds strongly to the 16S ribosomal RNA. The polypeptide is Small ribosomal subunit protein uS19 (Acinetobacter baumannii (strain AB307-0294)).